Reading from the N-terminus, the 152-residue chain is Transcriptional regulator MraZ (152 aa).

SpoVT-AbrB domains lie at Lys7–Arg51 and Leu89–Arg132.

Belongs to the MraZ family. As to quaternary structure, forms oligomers.

Its subcellular location is the cytoplasm. It is found in the nucleoid. The chain is Transcriptional regulator MraZ from Pelodictyon phaeoclathratiforme (strain DSM 5477 / BU-1).